We begin with the raw amino-acid sequence, 82 residues long: uncharacterized protein (82 aa).

Residues 55–64 are compositionally biased toward polar residues; the sequence is DQNTAPSTPS. The tract at residues 55-82 is disordered; that stretch reads DQNTAPSTPSKILPKRLPSQSNLNNNNN.

This is an uncharacterized protein from Dictyostelium discoideum (Social amoeba).